Here is a 273-residue protein sequence, read N- to C-terminus: Terpene cyclase ascF (273 aa).

Helical transmembrane passes span 18–38 (VYEATFQFGGVAWTLCYILIA), 49–69 (MPLFALANNFAWEMVYALWVV), 78–98 (MTIWMLIDTPIIYSILKHGVL), 113–133 (ILVGLIALCAAAHWSWQSWWI), 153–173 (YWAVSMCQFLVSTMSLAMLCV), 178–198 (GGVSWMIWLSRFLGTLIGLNM), and 217–237 (APAVFVWGVTTVCDIIYGFVL).

Belongs to the paxB family.

The protein resides in the membrane. It carries out the reaction ilicicolin A epoxide = ilicicolin C. The protein operates within secondary metabolite biosynthesis; terpenoid biosynthesis. Terpene cyclase; part of the asc-1 gene cluster that mediates the biosynthesis of both ascochlorin and ascofuranone, a strong inhibitor of cyanide-insensitive alternative oxidases and a promising drug candidate against African trypanosomiasis. The first step in the pathway is performed by the non-reducing polyketide synthase ascC that produces orsellinic acid by condensing acetyl-CoA with 3 malonyl-CoA units. Orsellinic acid is then prenylated by the prenyltransferase ascA to yield ilicicolinic acid B. Ilicicolinic acid B is further reduced to ilicicolin B by the reductase ascB. The halogenase ascD then chlorinates ilicicolin B to produce ilicicolin A which is converted to ilicicolin A epoxide by the cytochrome P450 monooxygenase ascE that catalyzes stereoselective epoxidation of the terminal double bond of the prenyl group. Ilicicolin A epoxide is the last common precursor for the biosynthesis of ascofuranone and ascochlorin. The terpene cyclase ascF produces a monocyclic terpene, and the cyclization reaction is proposed to be initiated by protonation of the terminal epoxide of ilicicolin A epoxide to generate a monocyclic tertiarycation, which is followed by a series of hydride and methyl shifts with abstraction of proton, leading to the formation of the (14S,15R,19R)-trimethylcyclohexanone ring structure of ilicicolin C, which is finally reduced to ascochlorin by the dehydrogenase ascG. On the other hand, ilicicolin A epoxide is hydroxylated by the cytochrome P450 monooxygenase ascH, and the resultant product is cyclized by the terpene cyclase ascI to ascofuranol via protonation-initiated epoxide ring opening, which facilitates the 6-endo-tet cyclization to form the tetrahy-drofuran ring. Finally, ascofuranol is oxidized into ascofuranone by ascJ. This chain is Terpene cyclase ascF, found in Acremonium egyptiacum (Oospora egyptiaca).